A 113-amino-acid polypeptide reads, in one-letter code: Colicin-E1 immunity protein (113 aa).

Its function is as follows. This protein is able to protect a cell, which harbors the plasmid ColE1 encoding colicin E1, against colicin E1. The polypeptide is Colicin-E1 immunity protein (imm) (Escherichia coli).